A 131-amino-acid chain; its full sequence is Small ribosomal subunit protein bS6 (131 aa).

The disordered stretch occupies residues 98-131 (EASPMARARDERDSRRGPAGERSYDEAHAEEIGE). The span at 104–131 (RARDERDSRRGPAGERSYDEAHAEEIGE) shows a compositional bias: basic and acidic residues.

Belongs to the bacterial ribosomal protein bS6 family.

Functionally, binds together with bS18 to 16S ribosomal RNA. This chain is Small ribosomal subunit protein bS6, found in Shewanella putrefaciens (strain CN-32 / ATCC BAA-453).